Reading from the N-terminus, the 312-residue chain is tRNA-cytidine(32) 2-sulfurtransferase (312 aa).

A PP-loop motif motif is present at residues 47 to 52 (SGGKDS). [4Fe-4S] cluster is bound by residues Cys-122, Cys-125, and Cys-213.

The protein belongs to the TtcA family. In terms of assembly, homodimer. The cofactor is Mg(2+). [4Fe-4S] cluster is required as a cofactor.

The protein localises to the cytoplasm. The catalysed reaction is cytidine(32) in tRNA + S-sulfanyl-L-cysteinyl-[cysteine desulfurase] + AH2 + ATP = 2-thiocytidine(32) in tRNA + L-cysteinyl-[cysteine desulfurase] + A + AMP + diphosphate + H(+). The protein operates within tRNA modification. In terms of biological role, catalyzes the ATP-dependent 2-thiolation of cytidine in position 32 of tRNA, to form 2-thiocytidine (s(2)C32). The sulfur atoms are provided by the cysteine/cysteine desulfurase (IscS) system. The polypeptide is tRNA-cytidine(32) 2-sulfurtransferase (Shewanella frigidimarina (strain NCIMB 400)).